The sequence spans 424 residues: UDP-N-acetylglucosamine 1-carboxyvinyltransferase (424 aa).

A phosphoenolpyruvate-binding site is contributed by 22 to 23 (KN). R98 contacts UDP-N-acetyl-alpha-D-glucosamine. The Proton donor role is filled by C122. C122 carries the 2-(S-cysteinyl)pyruvic acid O-phosphothioketal modification. UDP-N-acetyl-alpha-D-glucosamine contacts are provided by residues 127 to 131 (RPVDQ), D312, and I334.

This sequence belongs to the EPSP synthase family. MurA subfamily.

The protein resides in the cytoplasm. The catalysed reaction is phosphoenolpyruvate + UDP-N-acetyl-alpha-D-glucosamine = UDP-N-acetyl-3-O-(1-carboxyvinyl)-alpha-D-glucosamine + phosphate. Its pathway is cell wall biogenesis; peptidoglycan biosynthesis. Its function is as follows. Cell wall formation. Adds enolpyruvyl to UDP-N-acetylglucosamine. This is UDP-N-acetylglucosamine 1-carboxyvinyltransferase from Xanthomonas campestris pv. campestris (strain B100).